The following is a 369-amino-acid chain: Serine/threonine-protein acetyltransferase HopZ1a (369 aa).

The interval 1-46 is disordered; the sequence is MGNVCVGGSRMSHQVYSPDRADTPPRSERNTPDRRQRAAGDAERTQ. Residues 19 to 46 are compositionally biased toward basic and acidic residues; the sequence is DRADTPPRSERNTPDRRQRAAGDAERTQ. R49, K53, and R106 together coordinate 1D-myo-inositol hexakisphosphate. Catalysis depends on residues H150 and E170. H150 contributes to the CoA binding site. Residues A177 and 211–212 each bind CoA; that span reads KT. C216 is an active-site residue. 1D-myo-inositol hexakisphosphate contacts are provided by residues N222, 226 to 229, and 289 to 290; these read KAHK and KH. N6-acetyllysine; by autocatalysis is present on K289. A CoA-binding site is contributed by 292–295; the sequence is ASLT. 1D-myo-inositol hexakisphosphate-binding positions include 314–317 and R326; that span reads SEGH. Residues 331 to 334 and 344 to 348 each bind CoA; these read RVKR and SNTQF. The 1D-myo-inositol hexakisphosphate site is built by Q358 and R362.

It belongs to the acetyltransferase YopJ family. Interacts with host plant JAZ proteins (e.g. Glycine max JAZ1 and Arabidospis thaliana TIFY10B/JAZ2, TIFY11A/JAZ5, TIFY11B/JAZ6, TIFY5A/JAZ8 and TIFY3B/JAZ12) and triggers their degradation. Binds directly to SZE1 and SZE2 at the host plasma membrane; this interaction with a complex made of, at least, SZE1, BKN2/SZE2, ZAR1 and ZED1 triggers host immunity. The cofactor is 1D-myo-inositol hexakisphosphate. Post-translationally, autoacetylated at Lys-289; while autoacetylation at Lys-289 is required for virulence function to some extent, it is not essential.

It localises to the secreted. Its subcellular location is the host cell membrane. It is found in the host cytoplasm. The protein resides in the host cytoskeleton. The protein localises to the host nucleus. It catalyses the reaction L-threonyl-[protein] + acetyl-CoA = O-acetyl-L-threonyl-[protein] + CoA. The catalysed reaction is L-seryl-[protein] + acetyl-CoA = O-acetyl-L-seryl-[protein] + CoA. It carries out the reaction L-lysyl-[protein] + acetyl-CoA = N(6)-acetyl-L-lysyl-[protein] + CoA + H(+). With respect to regulation, 1D-myo-inositol hexakisphosphate activates protein-acetyltransferase activity via an allosteric mechanism: 1D-myo-inositol hexakisphosphate-binding induces a conformational rearrangement that stimulates the interaction with acetyl-CoA. Acetyltransferase activity is activated by phytic acid. In terms of biological role, serine/threonine-protein acetyltransferase translocated into infected cells, which impairs host microtubule network and host immunity by mediating acetylation of target proteins. Blocks secretion in host cells by mediating acetylation of host tubulin, thereby impairing host microbubule network. Impairs host cell immunity by mediating acetylation of host TIFY/JAZ transcription repressors (Arabidopsis thaliana TIFY10B/JAZ2, TIFY11A/JAZ5, TIFY11B/JAZ6, TIFY5A/JAZ8, TIFY9/JAZ10 and TIFY3B/JAZ12), thereby activating host jasmonate signaling. This Pseudomonas syringae pv. syringae protein is Serine/threonine-protein acetyltransferase HopZ1a.